The sequence spans 435 residues: Methylenetetrahydrofolate--tRNA-(uracil-5-)-methyltransferase TrmFO (435 aa).

FAD is bound at residue 9–14 (GGGLAG).

Belongs to the MnmG family. TrmFO subfamily. FAD is required as a cofactor.

It is found in the cytoplasm. It catalyses the reaction uridine(54) in tRNA + (6R)-5,10-methylene-5,6,7,8-tetrahydrofolate + NADH + H(+) = 5-methyluridine(54) in tRNA + (6S)-5,6,7,8-tetrahydrofolate + NAD(+). It carries out the reaction uridine(54) in tRNA + (6R)-5,10-methylene-5,6,7,8-tetrahydrofolate + NADPH + H(+) = 5-methyluridine(54) in tRNA + (6S)-5,6,7,8-tetrahydrofolate + NADP(+). Its function is as follows. Catalyzes the folate-dependent formation of 5-methyl-uridine at position 54 (M-5-U54) in all tRNAs. The chain is Methylenetetrahydrofolate--tRNA-(uracil-5-)-methyltransferase TrmFO from Citrifermentans bemidjiense (strain ATCC BAA-1014 / DSM 16622 / JCM 12645 / Bem) (Geobacter bemidjiensis).